The following is a 364-amino-acid chain: UDP-N-acetylglucosamine--N-acetylmuramyl-(pentapeptide) pyrophosphoryl-undecaprenol N-acetylglucosamine transferase 1 (364 aa).

UDP-N-acetyl-alpha-D-glucosamine contacts are provided by residues 10-12 (TGG), Asn124, Ser195, Ile250, and Gln295.

It belongs to the glycosyltransferase 28 family. MurG subfamily.

It is found in the cell membrane. It carries out the reaction di-trans,octa-cis-undecaprenyl diphospho-N-acetyl-alpha-D-muramoyl-L-alanyl-D-glutamyl-meso-2,6-diaminopimeloyl-D-alanyl-D-alanine + UDP-N-acetyl-alpha-D-glucosamine = di-trans,octa-cis-undecaprenyl diphospho-[N-acetyl-alpha-D-glucosaminyl-(1-&gt;4)]-N-acetyl-alpha-D-muramoyl-L-alanyl-D-glutamyl-meso-2,6-diaminopimeloyl-D-alanyl-D-alanine + UDP + H(+). The protein operates within cell wall biogenesis; peptidoglycan biosynthesis. Its function is as follows. Cell wall formation. Catalyzes the transfer of a GlcNAc subunit on undecaprenyl-pyrophosphoryl-MurNAc-pentapeptide (lipid intermediate I) to form undecaprenyl-pyrophosphoryl-MurNAc-(pentapeptide)GlcNAc (lipid intermediate II). This chain is UDP-N-acetylglucosamine--N-acetylmuramyl-(pentapeptide) pyrophosphoryl-undecaprenol N-acetylglucosamine transferase 1, found in Bacillus cereus (strain ATCC 10987 / NRS 248).